Reading from the N-terminus, the 224-residue chain is MTIHSPVVTVDGPSGAGKGTLCMLLAEKLGYNLLDSGAIYRVLALAAIHHGVDLGSEEGLVPLAANLDVQFKAEGDLVKVILEGEDVSSELRKEETGMAASKVAALPQVREALLRRQRAFASAPGLVADGRDMGTVVFTGAEVKIFLDASAEERANRRMKQLQQKGLNVRFDRLLSEIQERDDRDRNRAVAPLRPAEDALVLDSTSMNIDEVVAQALTFIESKL.

Position 12–20 (12–20 (GPSGAGKGT)) interacts with ATP.

This sequence belongs to the cytidylate kinase family. Type 1 subfamily.

The protein resides in the cytoplasm. The catalysed reaction is CMP + ATP = CDP + ADP. The enzyme catalyses dCMP + ATP = dCDP + ADP. In Aliivibrio salmonicida (strain LFI1238) (Vibrio salmonicida (strain LFI1238)), this protein is Cytidylate kinase.